Reading from the N-terminus, the 40-residue chain is Photosystem II reaction center protein J (40 aa).

The helical transmembrane segment at 8–28 (IPLWLIGTVAGILIIGLLGVF) threads the bilayer.

The protein belongs to the PsbJ family. PSII is composed of 1 copy each of membrane proteins PsbA, PsbB, PsbC, PsbD, PsbE, PsbF, PsbH, PsbI, PsbJ, PsbK, PsbL, PsbM, PsbT, PsbX, PsbY, PsbZ, Psb30/Ycf12, at least 3 peripheral proteins of the oxygen-evolving complex and a large number of cofactors. It forms dimeric complexes.

It is found in the plastid. The protein localises to the chloroplast thylakoid membrane. One of the components of the core complex of photosystem II (PSII). PSII is a light-driven water:plastoquinone oxidoreductase that uses light energy to abstract electrons from H(2)O, generating O(2) and a proton gradient subsequently used for ATP formation. It consists of a core antenna complex that captures photons, and an electron transfer chain that converts photonic excitation into a charge separation. The chain is Photosystem II reaction center protein J from Nandina domestica (Heavenly bamboo).